Consider the following 340-residue polypeptide: MIKVGIVGATGYTGLELIRLLNNHPNAKIIALCSRVNTGKAVIEEFPSLIGYVDLDFIIPDDKTLFECDVIFFATPHGVAMNSVGQFLDKGIKIIDLSADFRIKDSSTWSKWYGIVHTQSALLKNAVYGLPEVYSSQIKNATLVANPGCYPTAIILALKPLLKANSINTKSIIADCKSGVSGAGRNSNIATLFCEVNESLKPYNVNQHRHKPEAQQVLTDIANTDVDFIFTPHLIPMTRGMLASVYVDLTKDIDVQELFKNHYQDNRFVHVLSVGVYPQTKSVKGTNNCHIGIQKSNNKLIIMTVIDNINKGASGQAIQNMNLMFGIDEGLGLEQIGLLP.

Cys149 is an active-site residue.

Belongs to the NAGSA dehydrogenase family. Type 1 subfamily.

Its subcellular location is the cytoplasm. It carries out the reaction N-acetyl-L-glutamate 5-semialdehyde + phosphate + NADP(+) = N-acetyl-L-glutamyl 5-phosphate + NADPH + H(+). It functions in the pathway amino-acid biosynthesis; L-arginine biosynthesis; N(2)-acetyl-L-ornithine from L-glutamate: step 3/4. Catalyzes the NADPH-dependent reduction of N-acetyl-5-glutamyl phosphate to yield N-acetyl-L-glutamate 5-semialdehyde. The polypeptide is N-acetyl-gamma-glutamyl-phosphate reductase (Ruthia magnifica subsp. Calyptogena magnifica).